A 25-amino-acid polypeptide reads, in one-letter code: Acyl carrier protein (25 aa).

Residues 2 to 25 (ESIEQRVKKIVAEQLGVAEAEIKA) enclose the Carrier domain.

It belongs to the acyl carrier protein (ACP) family. Post-translationally, 4'-phosphopantetheine is transferred from CoA to a specific serine of apo-ACP by AcpS. This modification is essential for activity because fatty acids are bound in thioester linkage to the sulfhydryl of the prosthetic group.

Its subcellular location is the cytoplasm. It participates in lipid metabolism; fatty acid biosynthesis. In terms of biological role, carrier of the growing fatty acid chain in fatty acid biosynthesis. In Alcaligenes faecalis, this protein is Acyl carrier protein (acpP).